Here is a 242-residue protein sequence, read N- to C-terminus: Probable septum site-determining protein MinC (242 aa).

This sequence belongs to the MinC family. As to quaternary structure, interacts with MinD and FtsZ.

In terms of biological role, cell division inhibitor that blocks the formation of polar Z ring septums. Rapidly oscillates between the poles of the cell to destabilize FtsZ filaments that have formed before they mature into polar Z rings. Prevents FtsZ polymerization. The chain is Probable septum site-determining protein MinC from Brucella anthropi (strain ATCC 49188 / DSM 6882 / CCUG 24695 / JCM 21032 / LMG 3331 / NBRC 15819 / NCTC 12168 / Alc 37) (Ochrobactrum anthropi).